We begin with the raw amino-acid sequence, 312 residues long: MHTIDVIDSHTAGEPTRVVLAGFPDLGDGDLAQCRERFRSDFDHWRSAIACEPRGSDTMVGALLLPPRDPSACTGVIFFNNVGYLGMCGHGTIGVVRTLAELGRIAPGQHRIETPVGTVGVALADDGTVSIDNVESYRHAAGVEVDVPGHGRVRGDVAWGGNWFFITEQAPCALGLAQQRELTAYTEAIRLALEAAGITGEAGGEIDHIEISGVAPDGSGAARNFVLCPGLAYDRSPCGTGTSAKLACLAADGKLAEGERWLQQGILGSAFEGSYRHSGRGIAPRISGHAFITARSQLLIDPADPFAWGIVA.

Cysteine 88 functions as the Proton acceptor in the catalytic mechanism. Substrate-binding positions include 89–90 (GH), histidine 208, and aspartate 234. Cysteine 238 serves as the catalytic Proton donor. Position 239–240 (239–240 (GT)) interacts with substrate.

The protein belongs to the proline racemase family.

The catalysed reaction is trans-4-hydroxy-L-proline = cis-4-hydroxy-D-proline. Functionally, catalyzes the epimerization of trans-4-hydroxy-L-proline (t4LHyp) to cis-4-hydroxy-D-proline (c4DHyp). Is likely involved in a degradation pathway that converts t4LHyp to alpha-ketoglutarate. Can also catalyze the epimerization of trans-3-hydroxy-L-proline (t3LHyp) to cis-3-hydroxy-D-proline (c3DHyp), albeit with 500-fold lower efficiency. Displays no proline racemase activity. This is 4-hydroxyproline 2-epimerase from Xanthomonas campestris pv. campestris (strain ATCC 33913 / DSM 3586 / NCPPB 528 / LMG 568 / P 25).